Here is a 135-residue protein sequence, read N- to C-terminus: Small ribosomal subunit protein uS8 (135 aa).

Belongs to the universal ribosomal protein uS8 family. In terms of assembly, part of the 30S ribosomal subunit. Contacts proteins S5 and S12.

In terms of biological role, one of the primary rRNA binding proteins, it binds directly to 16S rRNA central domain where it helps coordinate assembly of the platform of the 30S subunit. This chain is Small ribosomal subunit protein uS8, found in Salinispora arenicola (strain CNS-205).